A 145-amino-acid chain; its full sequence is D-aminoacyl-tRNA deacylase (145 aa).

The short motif at 137–138 (GP) is the Gly-cisPro motif, important for rejection of L-amino acids element.

It belongs to the DTD family. As to quaternary structure, homodimer.

Its subcellular location is the cytoplasm. The catalysed reaction is glycyl-tRNA(Ala) + H2O = tRNA(Ala) + glycine + H(+). The enzyme catalyses a D-aminoacyl-tRNA + H2O = a tRNA + a D-alpha-amino acid + H(+). Its function is as follows. An aminoacyl-tRNA editing enzyme that deacylates mischarged D-aminoacyl-tRNAs. Also deacylates mischarged glycyl-tRNA(Ala), protecting cells against glycine mischarging by AlaRS. Acts via tRNA-based rather than protein-based catalysis; rejects L-amino acids rather than detecting D-amino acids in the active site. By recycling D-aminoacyl-tRNA to D-amino acids and free tRNA molecules, this enzyme counteracts the toxicity associated with the formation of D-aminoacyl-tRNA entities in vivo and helps enforce protein L-homochirality. This chain is D-aminoacyl-tRNA deacylase, found in Shigella dysenteriae serotype 1 (strain Sd197).